Reading from the N-terminus, the 688-residue chain is Potassium-transporting ATPase ATP-binding subunit (688 aa).

Transmembrane regions (helical) follow at residues 37 to 57 (FLVYISSILTTVLYAVSLVGI), 65 to 85 (ILGITIILWITVLFANFAEAI), 219 to 239 (IALQILLISLTIIFLLVTVSL), and 262 to 282 (VALLVCLAPTTIGALLSSIGI). The active-site 4-aspartylphosphate intermediate is D313. ATP contacts are provided by residues D350, E354, 383 to 390 (FTAKTRMS), and K401. Mg(2+) contacts are provided by D524 and D528. The next 3 membrane-spanning stretches (helical) occupy residues 594–614 (FAIIPALFIGLYPGLSALNIM), 622–642 (AIFSAIIYNALIIVALIPLAL), and 668–688 (IIVPFIAIKVIDVLITAIGIV).

Belongs to the cation transport ATPase (P-type) (TC 3.A.3) family. Type IA subfamily. In terms of assembly, the system is composed of three essential subunits: KdpA, KdpB and KdpC.

The protein resides in the cell membrane. The catalysed reaction is K(+)(out) + ATP + H2O = K(+)(in) + ADP + phosphate + H(+). Functionally, part of the high-affinity ATP-driven potassium transport (or Kdp) system, which catalyzes the hydrolysis of ATP coupled with the electrogenic transport of potassium into the cytoplasm. This subunit is responsible for energy coupling to the transport system and for the release of the potassium ions to the cytoplasm. The chain is Potassium-transporting ATPase ATP-binding subunit from Clostridium botulinum (strain Eklund 17B / Type B).